A 210-amino-acid polypeptide reads, in one-letter code: Thymidylate kinase (210 aa).

An ATP-binding site is contributed by 10–17; it reads GPEGAGKS.

The protein belongs to the thymidylate kinase family.

It carries out the reaction dTMP + ATP = dTDP + ADP. Functionally, phosphorylation of dTMP to form dTDP in both de novo and salvage pathways of dTTP synthesis. The polypeptide is Thymidylate kinase (Pseudomonas aeruginosa (strain LESB58)).